We begin with the raw amino-acid sequence, 430 residues long: Adenylosuccinate synthetase (430 aa).

GTP is bound by residues 12–18 (GDEGKGK) and 40–42 (GHT). The active-site Proton acceptor is D13. Residues D13 and G40 each contribute to the Mg(2+) site. Residues 13 to 16 (DEGK), 38 to 41 (NAGH), T130, R144, Q224, T239, and R303 each bind IMP. H41 functions as the Proton donor in the catalytic mechanism. 299 to 305 (VNTGRKR) is a binding site for substrate. GTP is bound by residues R305, 331-333 (KLD), and 413-415 (STS).

This sequence belongs to the adenylosuccinate synthetase family. Homodimer. Requires Mg(2+) as cofactor.

The protein resides in the cytoplasm. It catalyses the reaction IMP + L-aspartate + GTP = N(6)-(1,2-dicarboxyethyl)-AMP + GDP + phosphate + 2 H(+). It functions in the pathway purine metabolism; AMP biosynthesis via de novo pathway; AMP from IMP: step 1/2. Functionally, plays an important role in the de novo pathway of purine nucleotide biosynthesis. Catalyzes the first committed step in the biosynthesis of AMP from IMP. The sequence is that of Adenylosuccinate synthetase from Rhodopseudomonas palustris (strain TIE-1).